We begin with the raw amino-acid sequence, 358 residues long: NADH-quinone oxidoreductase subunit H (358 aa).

Helical transmembrane passes span 30 to 50, 96 to 116, 129 to 149, 168 to 188, 201 to 221, 265 to 285, 297 to 317, and 336 to 356; these read VVIGVCIVALYAILAILLIYM, FLYNLAPFMVIIASFLTFSCL, VGVFFLLAASSIGVVGILLAG, IISYELSVGLSILTMVVLMGT, GWFIFKGHIPALIAFVIYLIA, FIVAAVAATIFLGGWMPLHIV, IPGFIWFFGKAFFVVFLLMWI, and YLVPISMVNLVIMVLIVVFGL.

This sequence belongs to the complex I subunit 1 family. In terms of assembly, NDH-1 is composed of 14 different subunits. Subunits NuoA, H, J, K, L, M, N constitute the membrane sector of the complex.

The protein localises to the cell inner membrane. It carries out the reaction a quinone + NADH + 5 H(+)(in) = a quinol + NAD(+) + 4 H(+)(out). Functionally, NDH-1 shuttles electrons from NADH, via FMN and iron-sulfur (Fe-S) centers, to quinones in the respiratory chain. The immediate electron acceptor for the enzyme in this species is believed to be ubiquinone. Couples the redox reaction to proton translocation (for every two electrons transferred, four hydrogen ions are translocated across the cytoplasmic membrane), and thus conserves the redox energy in a proton gradient. This subunit may bind ubiquinone. The chain is NADH-quinone oxidoreductase subunit H from Bacteroides fragilis (strain ATCC 25285 / DSM 2151 / CCUG 4856 / JCM 11019 / LMG 10263 / NCTC 9343 / Onslow / VPI 2553 / EN-2).